A 354-amino-acid chain; its full sequence is S-adenosylmethionine:tRNA ribosyltransferase-isomerase (354 aa).

Belongs to the QueA family. Monomer.

It is found in the cytoplasm. The enzyme catalyses 7-aminomethyl-7-carbaguanosine(34) in tRNA + S-adenosyl-L-methionine = epoxyqueuosine(34) in tRNA + adenine + L-methionine + 2 H(+). It functions in the pathway tRNA modification; tRNA-queuosine biosynthesis. Transfers and isomerizes the ribose moiety from AdoMet to the 7-aminomethyl group of 7-deazaguanine (preQ1-tRNA) to give epoxyqueuosine (oQ-tRNA). The protein is S-adenosylmethionine:tRNA ribosyltransferase-isomerase of Pseudomonas savastanoi pv. phaseolicola (strain 1448A / Race 6) (Pseudomonas syringae pv. phaseolicola (strain 1448A / Race 6)).